The sequence spans 274 residues: Large ribosomal subunit protein uL2 (274 aa).

Disordered regions lie at residues 30-54 and 223-274; these read EKSLAFGKKSSGGRNNNGRITIRHK and VAMN…QLKG. The span at 36-48 shows a compositional bias: low complexity; sequence GKKSSGGRNNNGR. A compositionally biased stretch (basic and acidic residues) spans 263–274; sequence KFSDKYIKQLKG.

The protein belongs to the universal ribosomal protein uL2 family. Part of the 50S ribosomal subunit. Forms a bridge to the 30S subunit in the 70S ribosome.

In terms of biological role, one of the primary rRNA binding proteins. Required for association of the 30S and 50S subunits to form the 70S ribosome, for tRNA binding and peptide bond formation. It has been suggested to have peptidyltransferase activity; this is somewhat controversial. Makes several contacts with the 16S rRNA in the 70S ribosome. The sequence is that of Large ribosomal subunit protein uL2 from Wolbachia sp. subsp. Brugia malayi (strain TRS).